A 190-amino-acid polypeptide reads, in one-letter code: MSLVTALNGLDLFLVGLMGSGKTTIGKLLAESLGYTYVDTDSLIENVTGRSIPEIFASDGEAGFRQIETQVLEEVASYRRLVVATGGGIVIRPENWSYLQQGLVIWLDVPIPELLRRLEGDQNRPLLQTEAPATTLQALWEQRRDRYAQADLRIAIEASEDPEVTMQRILEVIPSVLKNSADSSPAEIET.

Position 19–24 (19–24 (GSGKTT)) interacts with ATP. Residue Thr23 participates in Mg(2+) binding. Asp41, Arg65, and Gly87 together coordinate substrate. Arg124 contributes to the ATP binding site. Arg143 provides a ligand contact to substrate.

It belongs to the shikimate kinase family. Monomer. The cofactor is Mg(2+).

It is found in the cytoplasm. It carries out the reaction shikimate + ATP = 3-phosphoshikimate + ADP + H(+). Its pathway is metabolic intermediate biosynthesis; chorismate biosynthesis; chorismate from D-erythrose 4-phosphate and phosphoenolpyruvate: step 5/7. Functionally, catalyzes the specific phosphorylation of the 3-hydroxyl group of shikimic acid using ATP as a cosubstrate. The chain is Shikimate kinase from Synechococcus sp. (strain ATCC 27144 / PCC 6301 / SAUG 1402/1) (Anacystis nidulans).